Reading from the N-terminus, the 142-residue chain is Sec-independent protein translocase protein TatB (142 aa).

A helical transmembrane segment spans residues 1–21 (MFDIGASELLVLVIVAIVVIG). The segment at 75-142 (RETAAQETAA…PAARPGSQQP (68 aa)) is disordered. A compositionally biased stretch (low complexity) spans 76-94 (ETAAQETAAAQGQTPAAAE). Residues 123-133 (AKVEARVEEAP) are compositionally biased toward basic and acidic residues.

The protein belongs to the TatB family. In terms of assembly, the Tat system comprises two distinct complexes: a TatABC complex, containing multiple copies of TatA, TatB and TatC subunits, and a separate TatA complex, containing only TatA subunits. Substrates initially bind to the TatABC complex, which probably triggers association of the separate TatA complex to form the active translocon.

It is found in the cell inner membrane. Functionally, part of the twin-arginine translocation (Tat) system that transports large folded proteins containing a characteristic twin-arginine motif in their signal peptide across membranes. Together with TatC, TatB is part of a receptor directly interacting with Tat signal peptides. TatB may form an oligomeric binding site that transiently accommodates folded Tat precursor proteins before their translocation. This Novosphingobium aromaticivorans (strain ATCC 700278 / DSM 12444 / CCUG 56034 / CIP 105152 / NBRC 16084 / F199) protein is Sec-independent protein translocase protein TatB.